We begin with the raw amino-acid sequence, 890 residues long: Translation initiation factor IF-2 (890 aa).

Positions 45-304 (LIDHLNQKNS…LQQGFQKPAQ (260 aa)) are disordered. Over residues 67-81 (STLNIPGTGGKSKSV) the composition is skewed to polar residues. Basic and acidic residues predominate over residues 92–217 (VKRDPQEAER…RMAEENKWTD (126 aa)). Residues 252–266 (GRGRNAKAARPKKGN) are compositionally biased toward basic residues. Residues 267-280 (KHSESKADREEARA) are compositionally biased toward basic and acidic residues. The tr-type G domain occupies 389–558 (PRAPVVTIMG…LLQAEVLELK (170 aa)). The segment at 398–405 (GHVDHGKT) is G1. Position 398–405 (398–405 (GHVDHGKT)) interacts with GTP. The segment at 423–427 (GITQH) is G2. A G3 region spans residues 444-447 (DTPG). GTP contacts are provided by residues 444 to 448 (DTPGH) and 498 to 501 (NKID). Positions 498–501 (NKID) are G4. The tract at residues 534-536 (SAK) is G5. An N6-acetyllysine modification is found at lysine 808.

The protein belongs to the TRAFAC class translation factor GTPase superfamily. Classic translation factor GTPase family. IF-2 subfamily.

It localises to the cytoplasm. One of the essential components for the initiation of protein synthesis. Protects formylmethionyl-tRNA from spontaneous hydrolysis and promotes its binding to the 30S ribosomal subunits. Also involved in the hydrolysis of GTP during the formation of the 70S ribosomal complex. In Escherichia fergusonii (strain ATCC 35469 / DSM 13698 / CCUG 18766 / IAM 14443 / JCM 21226 / LMG 7866 / NBRC 102419 / NCTC 12128 / CDC 0568-73), this protein is Translation initiation factor IF-2.